A 227-amino-acid polypeptide reads, in one-letter code: Peroxiredoxin-like 2A (227 aa).

The tract at residues leucine 13–valine 111 is thioredoxin fold. Catalysis depends on redox-active residues cysteine 84 and cysteine 87.

The protein belongs to the peroxiredoxin-like PRXL2 family. PRXL2A subfamily.

Its subcellular location is the cytoplasm. Functionally, involved in redox regulation of the cell. Acts as an antioxidant. This is Peroxiredoxin-like 2A (prxl2a) from Xenopus tropicalis (Western clawed frog).